Reading from the N-terminus, the 199-residue chain is Recombination protein RecR (199 aa).

The C4-type zinc-finger motif lies at 57-72 (CSICGNITEDDPCDIC). One can recognise a Toprim domain in the interval 80–176 (KAVLVVEDSK…KVTRLAHGLS (97 aa)).

The protein belongs to the RecR family.

Functionally, may play a role in DNA repair. It seems to be involved in an RecBC-independent recombinational process of DNA repair. It may act with RecF and RecO. In Pediococcus pentosaceus (strain ATCC 25745 / CCUG 21536 / LMG 10740 / 183-1w), this protein is Recombination protein RecR.